The chain runs to 882 residues: Apoptosis-linked gene 2-interacting protein X 1 (882 aa).

A BRO1 domain is found at 5–398 (GFLSAPLKST…VRMREATQLM (394 aa)). Positions 743–882 (GTNAAQSPAN…GGGGGANPFQ (140 aa)) are disordered. Positions 752 to 763 (NAPPRPPPPRPA) are enriched in pro residues. Low complexity-rich tracts occupy residues 791–830 (NPYQ…QYQP) and 847–871 (QQQW…QNQQ). Residues 872-882 (QGGGGGANPFQ) are compositionally biased toward gly residues.

In terms of biological role, required for lin-12 degradation after it has been internalised in the vulval precursor cells. This chain is Apoptosis-linked gene 2-interacting protein X 1 (alx-1), found in Caenorhabditis elegans.